We begin with the raw amino-acid sequence, 351 residues long: N-acetyl-gamma-glutamyl-phosphate reductase (351 aa).

C150 is an active-site residue.

The protein belongs to the NAGSA dehydrogenase family. Type 1 subfamily.

It localises to the cytoplasm. The catalysed reaction is N-acetyl-L-glutamate 5-semialdehyde + phosphate + NADP(+) = N-acetyl-L-glutamyl 5-phosphate + NADPH + H(+). It participates in amino-acid biosynthesis; L-arginine biosynthesis; N(2)-acetyl-L-ornithine from L-glutamate: step 3/4. In terms of biological role, catalyzes the NADPH-dependent reduction of N-acetyl-5-glutamyl phosphate to yield N-acetyl-L-glutamate 5-semialdehyde. This Heliobacterium modesticaldum (strain ATCC 51547 / Ice1) protein is N-acetyl-gamma-glutamyl-phosphate reductase.